The primary structure comprises 243 residues: Carboxy-S-adenosyl-L-methionine synthase (243 aa).

Residues Y40, 65 to 67 (GCS), 90 to 91 (DN), 118 to 119 (DI), N133, and R200 each bind S-adenosyl-L-methionine.

It belongs to the class I-like SAM-binding methyltransferase superfamily. Cx-SAM synthase family. As to quaternary structure, homodimer.

The catalysed reaction is prephenate + S-adenosyl-L-methionine = carboxy-S-adenosyl-L-methionine + 3-phenylpyruvate + H2O. Functionally, catalyzes the conversion of S-adenosyl-L-methionine (SAM) to carboxy-S-adenosyl-L-methionine (Cx-SAM). This chain is Carboxy-S-adenosyl-L-methionine synthase, found in Shewanella baltica (strain OS223).